The following is a 147-amino-acid chain: Hemoglobin subunit gamma (147 aa).

One can recognise a Globin domain in the interval 3–147; the sequence is NFTAEDKAAI…VASALASRYH (145 aa). Heme b contacts are provided by His64 and His93.

Belongs to the globin family. As to quaternary structure, heterotetramer of two alpha chains and two gamma chains in fetal hemoglobin (Hb F). Red blood cells.

In terms of biological role, gamma chains make up the fetal hemoglobin F, in combination with alpha chains. The chain is Hemoglobin subunit gamma (HBG) from Alouatta seniculus (Red howler monkey).